The primary structure comprises 338 residues: Mitochondrial genome maintenance exonuclease 1 (338 aa).

A mitochondrion-targeting transit peptide spans 1–64; sequence MKLPLTFCRL…RSVLSRGPAQ (64 aa). Residues D235, D248, and K250 contribute to the active site.

This sequence belongs to the MGME1 family.

It localises to the mitochondrion. Its function is as follows. Metal-dependent single-stranded DNA (ssDNA) exonuclease involved in mitochondrial genome maintenance. Has preference for 5'-3' exonuclease activity but is also capable of endonuclease activity on linear substrates. Necessary for maintenance of proper 7S DNA levels. Probably involved in mitochondrial DNA (mtDNA) repair, possibly via the processing of displaced DNA containing Okazaki fragments during RNA-primed DNA synthesis on the lagging strand or via processing of DNA flaps during long-patch base excision repair. Specifically binds 5-hydroxymethylcytosine (5hmC)-containing DNA in stem cells. The protein is Mitochondrial genome maintenance exonuclease 1 (Mgme1) of Mus musculus (Mouse).